Here is a 220-residue protein sequence, read N- to C-terminus: PRA1 family protein B4 (220 aa).

Residues 1-27 (MASSAPPVLPISNPQTVPSAAPSSVES) are disordered. Residues 12 to 27 (SNPQTVPSAAPSSVES) are compositionally biased toward polar residues. Transmembrane regions (helical) follow at residues 83 to 103 (YSYFKVNYLTVATAIVGFSLV), 105 to 125 (HPFSLVFLLCLLASWLFLYLF), 146 to 166 (GCLILFSIFVIFLTDVGSVLV), 170 to 190 (MIGVALICAHGAFRAPEDLFL), and 196 to 216 (AATGFLSFLGGAASSAAPAVI).

The protein belongs to the PRA1 family. In terms of assembly, interacts with PRA1B1, PRA1B2, PRA1B3, PRA1B5, PRA1B6 and PRA1E. Expressed in roots, lateral roots, lateral root caps, stomata and trichomes.

It is found in the endosome membrane. In terms of biological role, may be involved in both secretory and endocytic intracellular trafficking in the endosomal/prevacuolar compartments. This chain is PRA1 family protein B4 (PRA1B4), found in Arabidopsis thaliana (Mouse-ear cress).